The chain runs to 493 residues: 3-octaprenyl-4-hydroxybenzoate carboxy-lyase (493 aa).

Asparagine 172 is a binding site for Mn(2+). Prenylated FMN-binding positions include 175–177 (IYR), 189–191 (RWL), and 194–195 (RG). Glutamate 238 serves as a coordination point for Mn(2+). The Proton donor role is filled by aspartate 287.

It belongs to the UbiD family. Homohexamer. Prenylated FMN serves as cofactor. The cofactor is Mn(2+).

The protein localises to the cell membrane. The enzyme catalyses a 4-hydroxy-3-(all-trans-polyprenyl)benzoate + H(+) = a 2-(all-trans-polyprenyl)phenol + CO2. It functions in the pathway cofactor biosynthesis; ubiquinone biosynthesis. Its function is as follows. Catalyzes the decarboxylation of 3-octaprenyl-4-hydroxy benzoate to 2-octaprenylphenol, an intermediate step in ubiquinone biosynthesis. The sequence is that of 3-octaprenyl-4-hydroxybenzoate carboxy-lyase from Shewanella woodyi (strain ATCC 51908 / MS32).